The sequence spans 295 residues: UDP-N-acetylenolpyruvoylglucosamine reductase (295 aa).

One can recognise an FAD-binding PCMH-type domain in the interval 23–188 (KVGGPADFLA…ISAKFALKPG (166 aa)). Residue arginine 167 is part of the active site. The active-site Proton donor is serine 217. Glutamate 287 is a catalytic residue.

Belongs to the MurB family. It depends on FAD as a cofactor.

It localises to the cytoplasm. The enzyme catalyses UDP-N-acetyl-alpha-D-muramate + NADP(+) = UDP-N-acetyl-3-O-(1-carboxyvinyl)-alpha-D-glucosamine + NADPH + H(+). It functions in the pathway cell wall biogenesis; peptidoglycan biosynthesis. Functionally, cell wall formation. This Streptococcus pyogenes serotype M12 (strain MGAS9429) protein is UDP-N-acetylenolpyruvoylglucosamine reductase.